We begin with the raw amino-acid sequence, 280 residues long: UDP-3-O-acyl-N-acetylglucosamine deacetylase (280 aa).

Zn(2+) contacts are provided by His77, His238, and Asp242. Catalysis depends on His265, which acts as the Proton donor.

The protein belongs to the LpxC family. It depends on Zn(2+) as a cofactor.

The enzyme catalyses a UDP-3-O-[(3R)-3-hydroxyacyl]-N-acetyl-alpha-D-glucosamine + H2O = a UDP-3-O-[(3R)-3-hydroxyacyl]-alpha-D-glucosamine + acetate. Its pathway is glycolipid biosynthesis; lipid IV(A) biosynthesis; lipid IV(A) from (3R)-3-hydroxytetradecanoyl-[acyl-carrier-protein] and UDP-N-acetyl-alpha-D-glucosamine: step 2/6. Functionally, catalyzes the hydrolysis of UDP-3-O-myristoyl-N-acetylglucosamine to form UDP-3-O-myristoylglucosamine and acetate, the committed step in lipid A biosynthesis. The chain is UDP-3-O-acyl-N-acetylglucosamine deacetylase from Nostoc sp. (strain PCC 7120 / SAG 25.82 / UTEX 2576).